A 547-amino-acid chain; its full sequence is MDISIFLMVFLLFCVSLFLIFFVSCVKLSFFFVEWDFLSFKISVYFNSIMFSLILLLVTISVLVFSTYYLSGELNFNYYYFMLLVFVGSMFSLIFSSGCFSMLVSWDLLGISSFFLVLFYNNWDSCSGAMNTVLTNRLGDFFLFVFFSSTIFSSYYFLSLSFFCWLSSLMLLLASFTKSAQFPFSGWLPKAMSAPTPISSLVHSSTLVTAGLVLIMNFSEMILNKDVIMIIMVVGVFTMFFSSMAALVEEDLKKVVALSTLSQMGFSMLTVGIGLSFVSFIHLLSHALFKSCLFMQVGYLIHCSLGQQDGRNYSNLGNVPYFIQLQLLVTLFCLCGLVFSSGAVSKDYILEFFFSNFFMVVFACMFFFSVFLTFGYSYRLWKGFFMSFSRPVFCFSSSVVMNFLSLLLVLFSIFFIWWMNFNMLCMPCLFLYVDFFVPLFFVVMIMVVGFLCVKLLLKEFVYKFLVDFFAKGWVYGLKNYKFFDLFLGGINSLGVTFFSFTGFWSNSYMKSLYFNSVVIVLVLFFFLVWGCILSLKYALCKRMILAL.

Helical transmembrane passes span 3–23 (ISIF…IFFV), 45–65 (YFNS…VLVF), 80–100 (YFML…SGCF), 101–121 (SMLV…LFYN), 132–152 (TVLT…STIF), 198–218 (ISSL…IMNF), 227–247 (VIMI…MAAL), 264–284 (MGFS…IHLL), 319–339 (VPYF…GLVF), 352–372 (FFFS…SVFL), 399–419 (VVMN…IWWM), 430–450 (FLYV…VVGF), 460–477 (FVYK…VYGL), 485–505 (LFLG…GFWS), and 512–532 (LYFN…WGCI).

It belongs to the complex I subunit 5 family.

Its subcellular location is the mitochondrion inner membrane. The enzyme catalyses a ubiquinone + NADH + 5 H(+)(in) = a ubiquinol + NAD(+) + 4 H(+)(out). Its function is as follows. Core subunit of the mitochondrial membrane respiratory chain NADH dehydrogenase (Complex I) that is believed to belong to the minimal assembly required for catalysis. Complex I functions in the transfer of electrons from NADH to the respiratory chain. The immediate electron acceptor for the enzyme is believed to be ubiquinone. This chain is NADH-ubiquinone oxidoreductase chain 5 (ND5), found in Ascaris suum (Pig roundworm).